Here is a 316-residue protein sequence, read N- to C-terminus: MSPVISHPRSAAARHQSDELSPITITVDCPAKTNLTLEVGPAHDEWGGRHELDTTYCAIGVYDTVTATAKQPGAGFSLELEGAYLGDLASSRSDMRRNHAVLALFAMAQAAEREPDVALTITKRIPVGAGLGGGSADAAATMLAVNRLWELNWPIERLRTIAATLGADMPFCLTGGLAYGTGFGERITDIAPGSRDELALIEQGFSGEVLVGAYQSQLSTPEVYHTFDIVGAAEGDRNHLQAAAISLHPRSGQAIDAATQAGASHAFVSGSGPSVVAFAADEAAAQRIIEVWRDTAVVDRIIRAKSPEHPNISVRQ.

K32 is a catalytic residue. Position 126–136 (126–136) interacts with ATP; the sequence is PVGAGLGGGSA. Residue D168 is part of the active site.

Belongs to the GHMP kinase family. IspE subfamily.

It catalyses the reaction 4-CDP-2-C-methyl-D-erythritol + ATP = 4-CDP-2-C-methyl-D-erythritol 2-phosphate + ADP + H(+). It functions in the pathway isoprenoid biosynthesis; isopentenyl diphosphate biosynthesis via DXP pathway; isopentenyl diphosphate from 1-deoxy-D-xylulose 5-phosphate: step 3/6. Catalyzes the phosphorylation of the position 2 hydroxy group of 4-diphosphocytidyl-2C-methyl-D-erythritol. This Bifidobacterium longum (strain DJO10A) protein is 4-diphosphocytidyl-2-C-methyl-D-erythritol kinase.